An 80-amino-acid chain; its full sequence is Serine palmitoyltransferase small subunit B (80 aa).

Residues 1 to 11 (MDVKHIKDYLS) lie on the Cytoplasmic side of the membrane. The chain crosses the membrane as a helical span at residues 12 to 29 (WLYYQYLLITCSYVLEPW). Over 30 to 36 (EQSIFNT) the chain is Lumenal. The helical transmembrane segment at 37–57 (LLLTIIAMVIYSSYIFIPIHV) threads the bilayer. Topologically, residues 58–80 (RLAVEFFSRIFGGQHESTVALMS) are cytoplasmic.

This sequence belongs to the SPTSS family. SPTSSB subfamily. Component of the serine palmitoyltransferase (SPT) complex, which is composed of SPTLC1, SPTLC2 or SPTLC3 and SPTSSA or SPTSSB. The heterodimer consisting of SPTLC1 and SPTLC2/SPTLC3 forms the catalytic core of the enzyme, while SPTSSA or SPTSSB subunits determine substrate specificity. SPT also interacts with ORMDL proteins, especially ORMDL3, which negatively regulate SPT activity in the presence of ceramides.

Its subcellular location is the endoplasmic reticulum membrane. It participates in lipid metabolism; sphingolipid metabolism. Functionally, component of the serine palmitoyltransferase multisubunit enzyme (SPT) that catalyzes the initial and rate-limiting step in sphingolipid biosynthesis by condensing L-serine and activated acyl-CoA (most commonly palmitoyl-CoA) to form long-chain bases. The SPT complex is composed of SPTLC1, SPTLC2 or SPTLC3 and SPTSSA or SPTSSB. Within this complex, the heterodimer consisting of SPTLC1 and SPTLC2/SPTLC3 forms the catalytic core. Within the SPT complex, SPTSSB stimulates the catalytic activity and plays a role in substrate specificity. SPT complexes with this subunit showing a preference for longer acyl-CoAs. The SPTLC1-SPTLC2-SPTSSB complex shows a strong preference for C18-CoA substrate, while the SPTLC1-SPTLC3-SPTSSB isozyme displays an ability to use a broader range of acyl-CoAs, without apparent preference. This chain is Serine palmitoyltransferase small subunit B (sptssb), found in Xenopus laevis (African clawed frog).